A 777-amino-acid chain; its full sequence is DnaJ homolog subfamily C member 16 (777 aa).

The first 23 residues, 1–23 (MELGRAGPAGLLLLLLLLLAAQA), serve as a signal peptide directing secretion. The Cytoplasmic segment spans residues 24–531 (APERDPYRVL…DSLFHSNWRE (508 aa)). The J domain occupies 28–92 (DPYRVLGVGR…EKRANFDRYG (65 aa)). Residues 117 to 243 (FDESFFHFPF…LRQFVENLLP (127 aa)) form the Thioredoxin domain. Residues 532-552 (MMPLLSLLFSALFILFGTVIV) traverse the membrane as a helical; Anchor for type IV membrane protein segment. Residues 553 to 777 (QAFSDSSDTR…FYIPSWPALD (225 aa)) are Extracellular-facing. Residues 558–589 (SSDTRDSPASEKKDTTAKTEKNDTSFNKESNS) are disordered. Residues 559–580 (SDTRDSPASEKKDTTAKTEKND) show a composition bias toward basic and acidic residues. Asparagine 627 carries an N-linked (GlcNAc...) asparagine glycan.

It localises to the endoplasmic reticulum membrane. In terms of biological role, plays an important role in regulating the size of autophagosomes during the formation process. This Gallus gallus (Chicken) protein is DnaJ homolog subfamily C member 16 (DNAJC16).